The primary structure comprises 415 residues: Mitogen-activated protein kinase kinae MST7 (415 aa).

Residues 1 to 37 form a disordered region; sequence MADPFAPRTMKRRNVKGLALTPAAPKPPPTAENAPIH. The 266-residue stretch at 61–326 folds into the Protein kinase domain; the sequence is LEVIKDLGSG…EELFERDPFV (266 aa). Residues 67-75 and K90 each bind ATP; that span reads LGSGNGGTV. The interval 363 to 409 is disordered; that stretch reads DLLRSSDSPTATYHGDDRPLETPTSAYRVDPRRGPAEGSAGLADQVD.

Belongs to the protein kinase superfamily. STE Ser/Thr protein kinase family. MAP kinase kinase subfamily. Homodimer. Interacts with the adapter protein MST50. Interacts with TRX2.

The catalysed reaction is L-seryl-[protein] + ATP = O-phospho-L-seryl-[protein] + ADP + H(+). The enzyme catalyses L-threonyl-[protein] + ATP = O-phospho-L-threonyl-[protein] + ADP + H(+). Mitogen-activated protein kinase kinase; part of the MST11-MST7-PMK1 MAP kinase (MAPK) cascade that is essential for appressorium formation, penetration and invasive growth. The MST11-MST7-PMK1 MAP kinase cascade transduces signals from the cell surface sensors MDB2 and SHO1 that recognize various surface signals such as surface hydrophobicity, cutin monomers, and rice leaf waxes. MST7 acts as the upstream MAPKK that directly phosphorylates MAP kinase PMK1. The sequence is that of Mitogen-activated protein kinase kinae MST7 from Pyricularia oryzae (strain 70-15 / ATCC MYA-4617 / FGSC 8958) (Rice blast fungus).